A 77-amino-acid polypeptide reads, in one-letter code: Translation initiation factor IF-1, chloroplastic (77 aa).

Positions 1-71 (MKEQKWIHEG…TRGRIIYRLR (71 aa)) constitute an S1-like domain.

This sequence belongs to the IF-1 family. As to quaternary structure, component of the 30S ribosomal translation pre-initiation complex which assembles on the 30S ribosome in the order IF-2 and IF-3, IF-1 and N-formylmethionyl-tRNA(fMet); mRNA recruitment can occur at any time during PIC assembly.

The protein resides in the plastid. It localises to the chloroplast. In terms of biological role, one of the essential components for the initiation of protein synthesis. Stabilizes the binding of IF-2 and IF-3 on the 30S subunit to which N-formylmethionyl-tRNA(fMet) subsequently binds. Helps modulate mRNA selection, yielding the 30S pre-initiation complex (PIC). Upon addition of the 50S ribosomal subunit IF-1, IF-2 and IF-3 are released leaving the mature 70S translation initiation complex. The chain is Translation initiation factor IF-1, chloroplastic from Montinia caryophyllacea (Wild clove bush).